The sequence spans 177 residues: MSRVAKAPVSIPAGVEVTLNGQEITVKGGKGTLTRVINSAVAVTVEDGAIKFAPVEGVVNAWAQAGTARALINNMVVGVSQGFEKKLQLVGVGYRAKVAGSDVDLSLGFSHPLVHKLPAGVTAECPSQTEIVLRSIDKELVGQVAAEIRGYRPPEPYKGKGVRYANEEVRRKEAKKK.

The protein belongs to the universal ribosomal protein uL6 family. Part of the 50S ribosomal subunit.

Functionally, this protein binds to the 23S rRNA, and is important in its secondary structure. It is located near the subunit interface in the base of the L7/L12 stalk, and near the tRNA binding site of the peptidyltransferase center. The chain is Large ribosomal subunit protein uL6 from Shewanella amazonensis (strain ATCC BAA-1098 / SB2B).